The primary structure comprises 188 residues: CASP-like protein 4B1 (188 aa).

The segment covering 1–11 has biased composition (basic and acidic residues); sequence MTNPDKQKPVE. The disordered stretch occupies residues 1–34; the sequence is MTNPDKQKPVEVTDVETAAEKTSEPTPASGTSTI. Residues 1 to 46 are Cytoplasmic-facing; it reads MTNPDKQKPVEVTDVETAAEKTSEPTPASGTSTITQRWKREDLIKK. Polar residues predominate over residues 24–34; it reads EPTPASGTSTI. The helical transmembrane segment at 47–67 threads the bilayer; it reads ASPITRGICLLFSLLAFLIMV. Residues 68-84 lie on the Extracellular side of the membrane; sequence SNKHGYGRNFNEYEEYR. The helical transmembrane segment at 85–105 threads the bilayer; it reads YVLAISIISTLYTAWQTFAHF. At 106–120 the chain is on the cytoplasmic side; the sequence is SKREFFDRRTSTLVD. The helical transmembrane segment at 121 to 141 threads the bilayer; that stretch reads FSGDQIVAYLLISAASSAIPL. Topologically, residues 142 to 156 are extracellular; that stretch reads TNRFREGQDNIFTDS. The helical transmembrane segment at 157–177 threads the bilayer; that stretch reads AASAISMAIFAFVALALSALF. Topologically, residues 178–188 are cytoplasmic; that stretch reads SGYKLSTHSFI.

It belongs to the Casparian strip membrane proteins (CASP) family. As to quaternary structure, homodimer and heterodimers.

Its subcellular location is the cell membrane. The polypeptide is CASP-like protein 4B1 (Arabidopsis lyrata subsp. lyrata (Lyre-leaved rock-cress)).